The chain runs to 38 residues: Potassium channel toxin alpha-KTx 2.21 (38 aa).

Intrachain disulfides connect Cys-7/Cys-29, Cys-13/Cys-34, and Cys-17/Cys-36.

In terms of tissue distribution, expressed by the venom gland.

Its subcellular location is the secreted. In terms of biological role, inhibits human voltage-gated potassium (Kv) channels Kv1.2/KCNA2 and Kv1.3/KCNA3. Does not block human Kv1.1/KCNA1 at 100nM concentration. The protein is Potassium channel toxin alpha-KTx 2.21 of Centruroides bonito (Scorpion).